The chain runs to 255 residues: Triosephosphate isomerase (255 aa).

Residue 9–11 (NWK) participates in substrate binding. The active-site Electrophile is His-95. Glu-167 serves as the catalytic Proton acceptor. Substrate-binding positions include Gly-173, Ser-212, and 233-234 (GG).

The protein belongs to the triosephosphate isomerase family. In terms of assembly, homodimer.

Its subcellular location is the cytoplasm. The enzyme catalyses D-glyceraldehyde 3-phosphate = dihydroxyacetone phosphate. Its pathway is carbohydrate biosynthesis; gluconeogenesis. The protein operates within carbohydrate degradation; glycolysis; D-glyceraldehyde 3-phosphate from glycerone phosphate: step 1/1. Its function is as follows. Involved in the gluconeogenesis. Catalyzes stereospecifically the conversion of dihydroxyacetone phosphate (DHAP) to D-glyceraldehyde-3-phosphate (G3P). The protein is Triosephosphate isomerase of Salmonella dublin (strain CT_02021853).